The chain runs to 143 residues: Protein STIG1 (143 aa).

A signal peptide spans 1 to 23 (MDFIILLIAILALSSTPITIISG). Positions 76-87 (RTCCFNYFCVDL) are sufficient for PI(4)P binding. The tract at residues 80 to 83 (FNYF) is sufficient for binding to the extracellular domain of PRK2. Residues 88–115 (FTNRFNCGSCGLVCIVGTRCCGGICVDI) are sufficient for PI(3)P binding.

The protein belongs to the STIG1 family. As to quaternary structure, interacts with PRK1 and PRK2 (via extracellular domain). As to expression, expressed in the stigma and the upper section of the style.

It localises to the secreted. Its subcellular location is the extracellular space. It is found in the apoplast. Promotes pollen tube growth. A C-terminal peptide is cleaved from the propeptide in the stigmatic exudate and represent the major form of STIG1. Binds phosphoinositol lipids. The binding of external phosphatidylinositol 3-phosphate (PI(3)P) and PRK2 by STIG1 induces a rapid intracellular reactive oxygen species elevation. This Solanum lycopersicum (Tomato) protein is Protein STIG1.